The sequence spans 191 residues: Phospholipase A2-delta (191 aa).

An N-terminal signal peptide occupies residues 1 to 25 (MIRGGALTHVALGLTVFLLLAVVHS). Cystine bridges form between cysteine 29-cysteine 56, cysteine 33-cysteine 62, cysteine 38-cysteine 115, cysteine 49-cysteine 69, cysteine 68-cysteine 93, and cysteine 75-cysteine 86. Residues tyrosine 48, glycine 50, and tyrosine 53 each coordinate Ca(2+). Residue histidine 72 is part of the active site. Aspartate 73 is a Ca(2+) binding site. A disordered region spans residues 161-191 (KADTKDGLGTNQGPQTKDGSKVSVPMNPSPS).

The protein belongs to the phospholipase A2 family. The cofactor is Ca(2+). As to expression, specifically expressed in flowers but at a low level. Detected specifically in the pollen.

Its subcellular location is the secreted. The protein resides in the endoplasmic reticulum. The catalysed reaction is a 1,2-diacyl-sn-glycero-3-phosphocholine + H2O = a 1-acyl-sn-glycero-3-phosphocholine + a fatty acid + H(+). PA2 catalyzes the calcium-dependent hydrolysis of the 2-acyl groups in 3-sn-phosphoglycerides. Releases lysophospholipids (LPLs) and free fatty acids (FFAs) from membrane phospholipids in response to hormones and other external stimuli. Plays a role in pollen development and germination and tube growth. This chain is Phospholipase A2-delta (PLA2-DELTA), found in Arabidopsis thaliana (Mouse-ear cress).